The primary structure comprises 245 residues: Malonyl-[acyl-carrier protein] O-methyltransferase (245 aa).

The protein belongs to the methyltransferase superfamily.

The catalysed reaction is malonyl-[ACP] + S-adenosyl-L-methionine = malonyl-[ACP] methyl ester + S-adenosyl-L-homocysteine. It functions in the pathway cofactor biosynthesis; biotin biosynthesis. Converts the free carboxyl group of a malonyl-thioester to its methyl ester by transfer of a methyl group from S-adenosyl-L-methionine (SAM). It allows to synthesize pimeloyl-ACP via the fatty acid synthetic pathway. In Calditerrivibrio nitroreducens (strain DSM 19672 / NBRC 101217 / Yu37-1), this protein is Malonyl-[acyl-carrier protein] O-methyltransferase.